The primary structure comprises 323 residues: Delta-aminolevulinic acid dehydratase (323 aa).

The Zn(2+) site is built by cysteine 118, cysteine 120, and cysteine 128. The active-site Schiff-base intermediate with substrate is lysine 195. Residues arginine 205 and arginine 217 each coordinate 5-aminolevulinate. Residue glutamate 233 coordinates Mg(2+). Lysine 248 (schiff-base intermediate with substrate) is an active-site residue. Residues serine 274 and tyrosine 313 each coordinate 5-aminolevulinate.

It belongs to the ALAD family. In terms of assembly, homooctamer. Zn(2+) is required as a cofactor.

It catalyses the reaction 2 5-aminolevulinate = porphobilinogen + 2 H2O + H(+). The protein operates within porphyrin-containing compound metabolism; protoporphyrin-IX biosynthesis; coproporphyrinogen-III from 5-aminolevulinate: step 1/4. Its function is as follows. Catalyzes an early step in the biosynthesis of tetrapyrroles. Binds two molecules of 5-aminolevulinate per subunit, each at a distinct site, and catalyzes their condensation to form porphobilinogen. This is Delta-aminolevulinic acid dehydratase (hemB) from Staphylococcus aureus.